Reading from the N-terminus, the 105-residue chain is ATP synthase subunit c (105 aa).

Helical transmembrane passes span 32 to 52 (SILGAMIGLGIAAFGGAIGMG) and 78 to 98 (VAMAMIEAQVIYTLVFAIIAI).

It belongs to the ATPase C chain family. As to quaternary structure, F-type ATPases have 2 components, F(1) - the catalytic core - and F(0) - the membrane proton channel. F(1) has five subunits: alpha(3), beta(3), gamma(1), delta(1), epsilon(1). F(0) has three main subunits: a(1), b(2) and c(10-14). The alpha and beta chains form an alternating ring which encloses part of the gamma chain. F(1) is attached to F(0) by a central stalk formed by the gamma and epsilon chains, while a peripheral stalk is formed by the delta and b chains.

It localises to the cell inner membrane. Functionally, f(1)F(0) ATP synthase produces ATP from ADP in the presence of a proton or sodium gradient. F-type ATPases consist of two structural domains, F(1) containing the extramembraneous catalytic core and F(0) containing the membrane proton channel, linked together by a central stalk and a peripheral stalk. During catalysis, ATP synthesis in the catalytic domain of F(1) is coupled via a rotary mechanism of the central stalk subunits to proton translocation. Key component of the F(0) channel; it plays a direct role in translocation across the membrane. A homomeric c-ring of between 10-14 subunits forms the central stalk rotor element with the F(1) delta and epsilon subunits. The chain is ATP synthase subunit c from Helicobacter pylori (strain ATCC 700392 / 26695) (Campylobacter pylori).